We begin with the raw amino-acid sequence, 248 residues long: Putative mutator protein MutT4 (248 aa).

The disordered stretch occupies residues 1 to 64 (MSDGEQAKSR…GSTRMRTVHE (64 aa)). Residues 9–20 (SRRRRGRRRGRR) are compositionally biased toward basic residues. Residues 31 to 44 (AQPAGDATPTPATA) are compositionally biased toward low complexity. The segment covering 45-57 (KRSRSRSPRRGST) has biased composition (basic residues). A Nudix hydrolase domain is found at 62–198 (VHETSAGGLV…DERRLAEVAD (137 aa)). Residues Gly-103, Glu-118, Glu-121, and Glu-122 each coordinate Mg(2+). A Nudix box motif is present at residues 103 to 124 (GHIELGETAEQTAIREVAEETG). Residues 204–248 (LQSDGPAALPPLPPSSPRRRPQTHSRARHADDSAPGQHNGPGPGP) form a disordered region. The segment covering 220–230 (PRRRPQTHSRA) has biased composition (basic residues).

This sequence belongs to the Nudix hydrolase family. Requires Mg(2+) as cofactor. Mn(2+) serves as cofactor.

Its function is as follows. May be involved in the GO system responsible for removing an oxidatively damaged form of guanine (7,8-dihydro-8-oxoguanine, 8-oxo-dGTP) from DNA and the nucleotide pool. This is Putative mutator protein MutT4 (mutT4) from Mycobacterium tuberculosis (strain CDC 1551 / Oshkosh).